A 371-amino-acid polypeptide reads, in one-letter code: Mannose-1-phosphate guanylyltransferase catalytic subunit beta (371 aa).

Positions Arg-14–Pro-233 are substrate-binding domain. Asp-122 contributes to the GDP-alpha-D-mannose binding site. Asp-122 is a binding site for Mg(2+). Lys-173 is a catalytic residue. Asp-229 provides a ligand contact to GDP-alpha-D-mannose. A Mg(2+)-binding site is contributed by Asp-229. Positions Tyr-256–Met-371 are hexapeptide repeat domain.

It belongs to the transferase hexapeptide repeat family. Component of the GMPPA-GMPPB mannose-1-phosphate guanylyltransferase complex composed of 4 Gmppa subunits and 8 Gmppb subunits; the complex is organized into three layers, a central layer made up of 2 Gmppa dimers sandwiched between two layers each made up of 2 Gmppb dimers. Gmppb catalytic activity is reduced when part of the complex and binding of GDP-alpha-D-Mannose by Gmppa induces allosteric feedback inhibition of Gmppb. Requires Mg(2+) as cofactor.

It carries out the reaction alpha-D-mannose 1-phosphate + GTP + H(+) = GDP-alpha-D-mannose + diphosphate. The protein operates within nucleotide-sugar biosynthesis; GDP-alpha-D-mannose biosynthesis; GDP-alpha-D-mannose from alpha-D-mannose 1-phosphate (GTP route): step 1/1. Its activity is regulated as follows. Enzyme activity is reduced by incorporation into the GMPPA-GMPPB mannose-1-phosphate guanylyltransferase complex. Allosterically inhibited, when part of the GMPPA-GMPPB complex, by GDP-alpha-D-mannose binding to Gmppa. Catalytic subunit of the GMPPA-GMPPB mannose-1-phosphate guanylyltransferase complex. Catalyzes the formation of GDP-mannose, an essential precursor of glycan moieties of glycoproteins and glycolipids. Can catalyze the reverse reaction in vitro. Together with GMPPA regulates GDP-alpha-D-mannose levels. The sequence is that of Mannose-1-phosphate guanylyltransferase catalytic subunit beta from Drosophila pseudoobscura pseudoobscura (Fruit fly).